A 142-amino-acid chain; its full sequence is MTIEKTFSIIKPDAVKRNLIGAIYQRFENAGLKIVASKMVHLDATKAQGFYAEHEEKPFFNELVEFMTSGPVMVQVLEGEDAIHRYRELMGTTNPENAACGTIRSDFALSMRYNSVHGSDSPESAAREIAYFFTEDEICPRD.

ATP is bound by residues Lys-11, Phe-59, Arg-87, Thr-93, Arg-104, and Asn-114. The active-site Pros-phosphohistidine intermediate is the His-117.

This sequence belongs to the NDK family. Homotetramer. Mg(2+) is required as a cofactor.

The protein localises to the cytoplasm. It carries out the reaction a 2'-deoxyribonucleoside 5'-diphosphate + ATP = a 2'-deoxyribonucleoside 5'-triphosphate + ADP. It catalyses the reaction a ribonucleoside 5'-diphosphate + ATP = a ribonucleoside 5'-triphosphate + ADP. Its function is as follows. Major role in the synthesis of nucleoside triphosphates other than ATP. The ATP gamma phosphate is transferred to the NDP beta phosphate via a ping-pong mechanism, using a phosphorylated active-site intermediate. This Photobacterium profundum (strain SS9) protein is Nucleoside diphosphate kinase.